The primary structure comprises 535 residues: Atrial natriuretic peptide receptor 3 (535 aa).

The signal sequence occupies residues 1–26 (MRSLLLFTFSACVLLARALLAGGASS). Residues 27 to 40 (GGGDTGPGNRRRER) constitute a propeptide that is removed on maturation. Over 41–477 (EALAAQKIEV…CKSCGLEESA (437 aa)) the chain is Extracellular. Asparagine 81 carries N-linked (GlcNAc...) asparagine glycosylation. Cystine bridges form between cysteine 103–cysteine 131 and cysteine 208–cysteine 256. Asparagine 288 and asparagine 389 each carry an N-linked (GlcNAc...) asparagine glycan. Residues 478-498 (VTGIVVGALLGAGLLMAFYFF) traverse the membrane as a helical segment. Over 499 to 535 (RKKYRITIERRNHQEESNIGKHRELREDSIRSHFSVA) the chain is Cytoplasmic.

This sequence belongs to the ANF receptor family. Homodimer; disulfide-linked. Interacts with OSTN.

The protein resides in the cell membrane. In terms of biological role, receptor for the natriuretic peptide hormones, binding with similar affinities atrial natriuretic peptide NPPA/ANP, brain natriuretic peptide NPPB/BNP, and C-type natriuretic peptide NPPC/CNP. May function as a clearance receptor for NPPA, NPPB and NPPC, regulating their local concentrations and effects. Acts as a regulator of osteoblast differentiation and bone growth by binding to its ligand osteocrin, thereby preventing binding between NPR3/NPR-C and natriuretic peptides, leading to increase cGMP production. The protein is Atrial natriuretic peptide receptor 3 (Npr3) of Rattus norvegicus (Rat).